Here is a 153-residue protein sequence, read N- to C-terminus: CASP-like protein 5B1 (153 aa).

At 1-20 (MRELAGSPGTWSGLSLRVGQ) the chain is on the cytoplasmic side. Residues 21-41 (LVFAAASVCATASALGFAAYT) form a helical membrane-spanning segment. Ala-42 is a topological domain (extracellular). A helical membrane pass occupies residues 43-63 (FCYLIASMGLQALWSLGLACL). Topologically, residues 64–76 (DCYALKFKKDLHS) are cytoplasmic. The chain crosses the membrane as a helical span at residues 77–97 (AVLLSLFVVGDWVTAILSFAA). The Extracellular portion of the chain corresponds to 98–128 (SCSAAGVVVLFDRDIYACRNPQLPCGRFELA). The chain crosses the membrane as a helical span at residues 129–149 (IACAFLSWAFSATSALVMFWL). At 150–153 (LASL) the chain is on the cytoplasmic side.

The protein belongs to the Casparian strip membrane proteins (CASP) family. As to quaternary structure, homodimer and heterodimers.

It localises to the cell membrane. The protein is CASP-like protein 5B1 of Oryza sativa subsp. indica (Rice).